Here is a 256-residue protein sequence, read N- to C-terminus: Triosephosphate isomerase (256 aa).

Residue 12-14 (NWK) coordinates substrate. His99 serves as the catalytic Electrophile. Glu169 (proton acceptor) is an active-site residue. Substrate contacts are provided by residues Gly175, Ser214, and 235–236 (GG).

It belongs to the triosephosphate isomerase family. In terms of assembly, homodimer.

It is found in the cytoplasm. The catalysed reaction is D-glyceraldehyde 3-phosphate = dihydroxyacetone phosphate. It functions in the pathway carbohydrate biosynthesis; gluconeogenesis. The protein operates within carbohydrate degradation; glycolysis; D-glyceraldehyde 3-phosphate from glycerone phosphate: step 1/1. Involved in the gluconeogenesis. Catalyzes stereospecifically the conversion of dihydroxyacetone phosphate (DHAP) to D-glyceraldehyde-3-phosphate (G3P). This is Triosephosphate isomerase from Rhizobium etli (strain ATCC 51251 / DSM 11541 / JCM 21823 / NBRC 15573 / CFN 42).